Here is a 235-residue protein sequence, read N- to C-terminus: Orotidine 5'-phosphate decarboxylase (235 aa).

Residues D12, K34, 61-70 (DMKLLDIDNT), T116, R177, Q186, and R207 contribute to the substrate site. The active-site Proton donor is the K63.

Belongs to the OMP decarboxylase family. Type 1 subfamily. As to quaternary structure, homodimer.

The enzyme catalyses orotidine 5'-phosphate + H(+) = UMP + CO2. It functions in the pathway pyrimidine metabolism; UMP biosynthesis via de novo pathway; UMP from orotate: step 2/2. Functionally, catalyzes the decarboxylation of orotidine 5'-monophosphate (OMP) to uridine 5'-monophosphate (UMP). This Rhizobium leguminosarum bv. trifolii (strain WSM2304) protein is Orotidine 5'-phosphate decarboxylase.